The primary structure comprises 189 residues: UPF0301 protein PSEEN5058 (189 aa).

Belongs to the UPF0301 (AlgH) family.

The polypeptide is UPF0301 protein PSEEN5058 (Pseudomonas entomophila (strain L48)).